A 77-amino-acid chain; its full sequence is Teretoxin Tan15.2 (77 aa).

The first 21 residues, 1–21 (MTRLTVVFLAILVLLPLATSN), serve as a signal peptide directing secretion. A propeptide spanning residues 22-40 (SGADEAPASLSDLLHRTKR) is cleaved from the precursor.

In terms of processing, contains 4 disulfide bonds. In terms of tissue distribution, expressed by the venom duct.

The protein resides in the secreted. The protein is Teretoxin Tan15.2 of Terebra anilis (Auger snail).